The following is a 1255-amino-acid chain: ATP-binding cassette sub-family B member 5 (1255 aa).

Residues 46 to 66 (IVLMTLGILASMINGATVPLM) form a helical membrane-spanning segment. The 301-residue stretch at 51-351 (LGILASMING…SVAPHLETFT (301 aa)) folds into the ABC transmembrane type-1 1 domain. Residues N86 and N92 are each glycosylated (N-linked (GlcNAc...) asparagine). Residues 104–124 (IIVLTLYYIGIGAAALIFGYV) form a helical membrane-spanning segment. An N-linked (GlcNAc...) asparagine glycan is attached at N189. A run of 2 helical transmembrane segments spans residues 290 to 310 (LSLGAVYFFMNGAYGLAFWYG) and 314 to 334 (IFGGEPGYTIGTILAVFFSVI). N-linked (GlcNAc...) asparagine glycosylation is found at N372 and N391. Positions 387–623 (IEFKNVSFSY…QGLYYSLAMA (237 aa)) constitute an ABC transporter 1 domain. Position 422-429 (422-429 (GPSGSGKS)) interacts with ATP. N-linked (GlcNAc...) asparagine glycosylation occurs at N643. Transmembrane regions (helical) follow at residues 694–714 (VLGTLASALNGSVHPVFSIIF) and 738–758 (MMLVVLGIVALVTYLMQGLFY). The ABC transmembrane type-1 2 domain occupies 694–981 (VLGTLASALN…TLVWAPEYSK (288 aa)). N-linked (GlcNAc...) asparagine glycosylation occurs at N790. A run of 3 helical transmembrane segments spans residues 814–836 (LGIVTQDVSNMSLSILISFIYGW), 841–863 (LILSFAPVLAVTGMIQTAAMAGF), and 955–975 (MFIVFTAIAYGAMAIGETLVW). The ABC transporter 2 domain maps to 1016-1254 (LEFREVSFVY…GDTYFKLVAA (239 aa)). A glycan (N-linked (GlcNAc...) asparagine) is linked at N1036. 1051–1058 (GSSGCGKS) lines the ATP pocket. Residues N1105, N1189, and N1229 are each glycosylated (N-linked (GlcNAc...) asparagine).

Belongs to the ABC transporter superfamily. ABCB family. Multidrug resistance exporter (TC 3.A.1.201) subfamily. As to expression, in developing eye, expressed in basal limbal epithelium but not in central cornea. Acts as a marker of limbal stem cells.

It is found in the cell membrane. The enzyme catalyses daunorubicin(in) + ATP + H2O = daunorubicin(out) + ADP + phosphate + H(+). Energy-dependent efflux transporter responsible for decreased drug accumulation in multidrug-resistant cells. Specifically present in limbal stem cells, where it plays a key role in corneal development and repair. This is ATP-binding cassette sub-family B member 5 from Mus musculus (Mouse).